Consider the following 301-residue polypeptide: Acetaldehyde dehydrogenase (301 aa).

Residue cysteine 130 is the Acyl-thioester intermediate of the active site. Residues serine 161–asparagine 169 and asparagine 272 each bind NAD(+).

This sequence belongs to the acetaldehyde dehydrogenase family.

The catalysed reaction is acetaldehyde + NAD(+) + CoA = acetyl-CoA + NADH + H(+). This Cupriavidus taiwanensis (strain DSM 17343 / BCRC 17206 / CCUG 44338 / CIP 107171 / LMG 19424 / R1) (Ralstonia taiwanensis (strain LMG 19424)) protein is Acetaldehyde dehydrogenase (mhpF).